Here is a 474-residue protein sequence, read N- to C-terminus: tRNA-2-methylthio-N(6)-dimethylallyladenosine synthase (474 aa).

An MTTase N-terminal domain is found at 3–120 (KKLHIKTWGC…LPEMINHVQE (118 aa)). 6 residues coordinate [4Fe-4S] cluster: Cys12, Cys49, Cys83, Cys157, Cys161, and Cys164. The Radical SAM core domain maps to 143-375 (RAEGPTAFVS…QQRISQQAME (233 aa)). The region spanning 378–441 (RKMVGTVQRV…ASSLRGILLR (64 aa)) is the TRAM domain.

This sequence belongs to the methylthiotransferase family. MiaB subfamily. Monomer. [4Fe-4S] cluster is required as a cofactor.

It is found in the cytoplasm. It carries out the reaction N(6)-dimethylallyladenosine(37) in tRNA + (sulfur carrier)-SH + AH2 + 2 S-adenosyl-L-methionine = 2-methylsulfanyl-N(6)-dimethylallyladenosine(37) in tRNA + (sulfur carrier)-H + 5'-deoxyadenosine + L-methionine + A + S-adenosyl-L-homocysteine + 2 H(+). Its function is as follows. Catalyzes the methylthiolation of N6-(dimethylallyl)adenosine (i(6)A), leading to the formation of 2-methylthio-N6-(dimethylallyl)adenosine (ms(2)i(6)A) at position 37 in tRNAs that read codons beginning with uridine. In Yersinia pseudotuberculosis serotype O:3 (strain YPIII), this protein is tRNA-2-methylthio-N(6)-dimethylallyladenosine synthase.